We begin with the raw amino-acid sequence, 321 residues long: MERFSLRFVLMMVSIILTSSICQAQLSPTFYDQSCRNALSKIRSSVRTAIARERRMAASLIRMHFHDCFVHGCDASILLEGTSTIESERDALPNFKSVRGFEVIDKAKSEVEKVCPGIVSCADIIAVAARDASEYVGGPKWAVKVGRRDSTAAFKALANSGELPGFKDTLDQLSGLFSKKGLNTRDLVALSGAHTIGQSQCFLFRDRLYENSSDIDAGFASTRKRRCPTVGGDGNLAALDLVTPNSFDNNYYKNLMQKKGLLVTDQVLFGSGASTDGIVSEYSKNRSKFAADFATAMIKMGNIEPLTGSNGEIRKICSFVN.

The signal sequence occupies residues M1–A24. Q25 carries the pyrrolidone carboxylic acid modification. Cystine bridges form between C35/C115, C68/C73, C121/C317, and C201/C227. Catalysis depends on H66, which acts as the Proton acceptor. Ca(2+) is bound by residues D67, V70, G72, D74, and S76. A substrate-binding site is contributed by P164. H194 is a heme b binding site. T195 provides a ligand contact to Ca(2+). A glycan (N-linked (GlcNAc...) asparagine) is linked at N211. Ca(2+) is bound by residues D240, T243, and D248. The N-linked (GlcNAc...) asparagine glycan is linked to N285.

This sequence belongs to the peroxidase family. Classical plant (class III) peroxidase subfamily. Heme b serves as cofactor. Ca(2+) is required as a cofactor.

It is found in the secreted. It catalyses the reaction 2 a phenolic donor + H2O2 = 2 a phenolic radical donor + 2 H2O. Functionally, removal of H(2)O(2), oxidation of toxic reductants, biosynthesis and degradation of lignin, suberization, auxin catabolism, response to environmental stresses such as wounding, pathogen attack and oxidative stress. These functions might be dependent on each isozyme/isoform in each plant tissue. The chain is Peroxidase 5 (PER5) from Arabidopsis thaliana (Mouse-ear cress).